The sequence spans 154 residues: Aminoalkylphosphonate N-acetyltransferase (154 aa).

The 141-residue stretch at 14 to 154 folds into the N-acetyltransferase domain; that stretch reads CELRHATTED…QSHFRFTKAL (141 aa).

In terms of assembly, homodimer. The cofactor is a divalent metal cation.

It carries out the reaction aminomethylphosphonate + acetyl-CoA = 2-N-acetamidomethylphosphonate + CoA. The enzyme catalyses (S)-1-aminoethylphosphonate + acetyl-CoA = [(1S)-1-acetamidoethyl]phosphonate + CoA. In terms of biological role, aminoalkylphosphonate N-acetyltransferase which is able to acetylate a range of aminoalkylphosphonic acids, including (S)-1-aminoethylphosphonate ((S)-1AEP) and 2-aminoethylphosphonate, using acetyl-CoA as acetyl donor. Its physiological role in S.typhimurium is unclear. However, by acetylating (S)-1AEP, PhnO would protect against the deleterious effects of (S)-1AEP, a structural analog of D-alanine that has antibacterial properties. This chain is Aminoalkylphosphonate N-acetyltransferase, found in Salmonella typhimurium (strain LT2 / SGSC1412 / ATCC 700720).